Here is a 215-residue protein sequence, read N- to C-terminus: Inositol diphosphatase DSP1 (215 aa).

Residues 58 to 209 form the Tyrosine-protein phosphatase domain; sequence NFSMVDNGIF…VSSFSHIPMS (152 aa). The interval 114-126 is WPD loop important for active site topology; the sequence is FGIEGNKEPFVNI. Asn-125, Ile-126, His-129, and Lys-130 together coordinate 1D-myo-inositol hexakisphosphate. The active-site Phosphocysteine intermediate is the Cys-150.

Belongs to the protein-tyrosine phosphatase family. Atypical dual-specificity phosphatase Siw14-like subfamily. In terms of assembly, homodimer and homohexamer; behaves as a monomer in solution. Highly expressed in siliques and at lower levels in roots, leaves and flowers.

It carries out the reaction 5-diphospho-1D-myo-inositol 1,2,3,4,6-pentakisphosphate + H2O = 1D-myo-inositol hexakisphosphate + phosphate + H(+). The enzyme catalyses 1,5-bis(diphospho)-1D-myo-inositol 2,3,4,6-tetrakisphosphate + H2O = 1-diphospho-1D-myo-inositol 2,3,4,5,6-pentakisphosphate + phosphate + 2 H(+). The catalysed reaction is 3,5-bis(diphospho)-1D-myo-inositol 1,2,4,6-tetrakisphosphate + H2O = 3-diphospho-1D-myo-inositol 1,2,4,5,6-pentakisphosphate + phosphate + 2 H(+). It catalyses the reaction 6-diphospho-1D-myo-inositol pentakisphosphate + H2O = 1D-myo-inositol hexakisphosphate + phosphate + H(+). It carries out the reaction 5-diphospho-1D-myo-inositol 1,3,4,6-tetrakisphosphate + H2O = 1D-myo-inositol 1,3,4,5,6-pentakisphosphate + phosphate + H(+). With respect to regulation, inhibited by manganese, calcium and zinc ions but not magnesium ions. In terms of biological role, cleaves the beta-phosphate at the 5-position of soluble inositol pyrophosphates. Has highest activity on 5-diphosphoinositol 1,2,3,4,6-pentakisphosphate (5-InsP(7)), 1,5-bis-diphosphoinositol 2,3,4,6-tetrakisphosphate (1,5-InsP(8)) and 3,5-InsP(8), but has weak activity against 1-diphosphoinositol 2,3,4,5,6-pentakisphosphate (1-InsP(7)). Dephosphorylates the phosphoinositides PI(3,4,5)P3, PI(3,5)P2, but not PI(3)P, PI(3,4)P2 or PI(4,5)P2. Possesses phosphotyrosine phosphatase activity in vitro, and can hydrolyze para-nitrophenyl phosphate, O-methylfluorescein phosphate, polyphosphate and ATP. This is Inositol diphosphatase DSP1 from Arabidopsis thaliana (Mouse-ear cress).